Here is a 159-residue protein sequence, read N- to C-terminus: Calcium-binding protein CML39 (159 aa).

4 EF-hand domains span residues 18–53 (EKNRDLEAVFAYMDANRDGRISAEELKKSFKTLGEQ), 54–89 (MSDEEAEAAVKLSDIDGDGMLDINEFALLIKGNDEF), 93–128 (EKKRKIMEAFRMYIADGEDCITPGSLKMMLMKLGES), and 129–159 (RTTDDCKVMIQAFDLNADGVLSFDEFALMMR). Residues aspartate 31, asparagine 33, aspartate 35, arginine 37, glutamate 42, aspartate 67, aspartate 69, aspartate 71, methionine 73, and glutamate 78 each coordinate Ca(2+). The Ca(2+) site is built by aspartate 142, asparagine 144, aspartate 146, and glutamate 153.

Expressed in the zones of elongation and differentiation in seedling roots and at the root-hypocotyl junction. Expressed from stage 12 of flower development in anthers, specifically in pollen.

Functionally, potential calcium sensor that binds calcium in vitro. The sequence is that of Calcium-binding protein CML39 (CML39) from Arabidopsis thaliana (Mouse-ear cress).